We begin with the raw amino-acid sequence, 74 residues long: Cytochrome c oxidase assembly factor 5 (74 aa).

In terms of domain architecture, CHCH spans E27–R65. Positions C30–C41 match the Cx10C motif motif. Disulfide bonds link C30–C57 and C41–C47. S37 bears the Phosphoserine mark. The Cx9C motif signature appears at C47–C57.

Belongs to the PET191 family.

In terms of biological role, involved in an early step of the mitochondrial complex IV assembly process. The chain is Cytochrome c oxidase assembly factor 5 (Coa5) from Pongo abelii (Sumatran orangutan).